We begin with the raw amino-acid sequence, 388 residues long: MKFEVLKTDGNARAGVLTTAHSVIQTPIFMPVGTVGAVKSLDATDMREILDAKIILANTYHMYLRPGSRVVAEFGGLHGFCKFNRSFLTDSGGFQAFSLRANTKNDEGGIKFKSHIDGSIHYFTPRSVLDTQYELDSDIMMILDDLVELPRDPHALGADEKARLKKRIDLSVTRTIKWAREAIDYHKFKQSQGAGLDQNIFGIIQGGTDYDARKICAQALCEMPFDGLAIGGLSVGEANEHMYETVEAVMPFIDAARPRYLMGVGTPEDIVENVQRGVDMFDCVMPTRNARNGTLFTSFGKIAIKNARFVNDHEPIDPECECYTCRRYSRGYLNHLFRAHELTFFRLASLHNLHYYLNLMKQIREAITAGKFSEFKREFYAKRSGGEI.

The active-site Proton acceptor is aspartate 90. Substrate is bound by residues 90–94, aspartate 144, glutamine 205, and glycine 232; that span reads DSGGF. The segment at 263 to 269 is RNA binding; that stretch reads GVGTPED. Aspartate 282 functions as the Nucleophile in the catalytic mechanism. The interval 287–291 is RNA binding; important for wobble base 34 recognition; it reads TRNAR. Positions 320, 322, 325, and 351 each coordinate Zn(2+).

The protein belongs to the queuine tRNA-ribosyltransferase family. As to quaternary structure, homodimer. Within each dimer, one monomer is responsible for RNA recognition and catalysis, while the other monomer binds to the replacement base PreQ1. Requires Zn(2+) as cofactor.

It catalyses the reaction 7-aminomethyl-7-carbaguanine + guanosine(34) in tRNA = 7-aminomethyl-7-carbaguanosine(34) in tRNA + guanine. Its pathway is tRNA modification; tRNA-queuosine biosynthesis. Catalyzes the base-exchange of a guanine (G) residue with the queuine precursor 7-aminomethyl-7-deazaguanine (PreQ1) at position 34 (anticodon wobble position) in tRNAs with GU(N) anticodons (tRNA-Asp, -Asn, -His and -Tyr). Catalysis occurs through a double-displacement mechanism. The nucleophile active site attacks the C1' of nucleotide 34 to detach the guanine base from the RNA, forming a covalent enzyme-RNA intermediate. The proton acceptor active site deprotonates the incoming PreQ1, allowing a nucleophilic attack on the C1' of the ribose to form the product. After dissociation, two additional enzymatic reactions on the tRNA convert PreQ1 to queuine (Q), resulting in the hypermodified nucleoside queuosine (7-(((4,5-cis-dihydroxy-2-cyclopenten-1-yl)amino)methyl)-7-deazaguanosine). The polypeptide is Queuine tRNA-ribosyltransferase (Campylobacter curvus (strain 525.92)).